Reading from the N-terminus, the 444-residue chain is Tol-Pal system protein TolB (444 aa).

The signal sequence occupies residues Met1–Ala18.

Belongs to the TolB family. The Tol-Pal system is composed of five core proteins: the inner membrane proteins TolA, TolQ and TolR, the periplasmic protein TolB and the outer membrane protein Pal. They form a network linking the inner and outer membranes and the peptidoglycan layer.

The protein resides in the periplasm. Functionally, part of the Tol-Pal system, which plays a role in outer membrane invagination during cell division and is important for maintaining outer membrane integrity. The protein is Tol-Pal system protein TolB of Rickettsia bellii (strain OSU 85-389).